The following is a 220-amino-acid chain: RING-H2 finger protein ATL77 (220 aa).

The chain crosses the membrane as a helical span at residues 53–73; sequence LMLLSILLCGIICSLGLHYII. Residues 130 to 172 form an RING-type; atypical zinc finger; that stretch reads CVICLSDFVAGEQLRVLPKCNHGFHLRCIDKWLTQHMTCPKCR.

The protein belongs to the RING-type zinc finger family. ATL subfamily.

It is found in the membrane. The catalysed reaction is S-ubiquitinyl-[E2 ubiquitin-conjugating enzyme]-L-cysteine + [acceptor protein]-L-lysine = [E2 ubiquitin-conjugating enzyme]-L-cysteine + N(6)-ubiquitinyl-[acceptor protein]-L-lysine.. It participates in protein modification; protein ubiquitination. The polypeptide is RING-H2 finger protein ATL77 (ATL77) (Arabidopsis thaliana (Mouse-ear cress)).